An 875-amino-acid polypeptide reads, in one-letter code: Neurotrypsin (875 aa).

Residues 1–20 (MTLARFVLALVLGALPEVVG) form the signal peptide. The N-linked (GlcNAc...) asparagine glycan is linked to N26. The tract at residues 29–68 (LHHRHRHSPPPGPQYPYYLPTHQRPPRTRPPPPLPRFSRP) is disordered. Residues 93–165 (CPPGEPWVSV…GKVDWGYCDC (73 aa)) enclose the Kringle domain. 20 cysteine pairs are disulfide-bonded: C93-C165, C109-C149, C138-C163, C195-C259, C208-C269, C239-C249, C305-C369, C318-C379, C349-C359, C412-C475, C425-C485, C455-C465, C525-C589, C538-C599, C569-C579, C619-C750, C661-C677, C765-C831, C794-C808, and C821-C850. 4 SRCR domains span residues 170-271 (VRLR…TCSF), 280-381 (IRLV…SCTP), 387-487 (IRLA…ACYP), and 500-601 (VRLM…ICDY). A zymogen activation region region spans residues 619 to 630 (CGLRLLHRRQKR). The 244-residue stretch at 631-874 (IIGGKNSLRG…FVPWIKSVTK (244 aa)) folds into the Peptidase S1 domain. H676 functions as the Charge relay system in the catalytic mechanism. N-linked (GlcNAc...) asparagine glycosylation occurs at N683. Catalysis depends on D726, which acts as the Charge relay system. S825 functions as the Charge relay system in the catalytic mechanism.

This sequence belongs to the peptidase S1 family.

It is found in the secreted. Functionally, plays a role in neuronal plasticity and the proteolytic action may subserve structural reorganizations associated with learning and memory operations. In Trachypithecus phayrei (Phayre's leaf monkey), this protein is Neurotrypsin (PRSS12).